Reading from the N-terminus, the 282-residue chain is Transcription repressor OFP18 (282 aa).

A disordered region spans residues 1–85 (MVRKMKLPFL…YSSFSSTSHA (85 aa)). Positions 15–35 (SSSSFSSNSSSSSSSWPWPSS) are enriched in low complexity. Residues 36–47 (HQQNLKTISSKA) show a composition bias toward polar residues. The segment covering 66–85 (SFSSSPSSSSYSSFSSTSHA) has biased composition (low complexity). In terms of domain architecture, OVATE spans 139–199 (LSLESNDPYT…FAAFVDLVLN (61 aa)).

Expressed in roots and shoots.

Its subcellular location is the nucleus. Its function is as follows. Transcriptional repressor that regulates multiple aspects of plant growth and development through the regulation of BEL1-LIKE (BLH) and KNOX TALE (KNAT) homeodomain transcription factors. The sequence is that of Transcription repressor OFP18 (OFP18) from Arabidopsis thaliana (Mouse-ear cress).